A 364-amino-acid chain; its full sequence is Mannonate dehydratase (364 aa).

This sequence belongs to the mannonate dehydratase family. Requires Fe(2+) as cofactor. It depends on Mn(2+) as a cofactor.

It carries out the reaction D-mannonate = 2-dehydro-3-deoxy-D-gluconate + H2O. The protein operates within carbohydrate metabolism; pentose and glucuronate interconversion. Functionally, catalyzes the dehydration of D-mannonate. This chain is Mannonate dehydratase, found in Endomicrobium trichonymphae.